Reading from the N-terminus, the 328-residue chain is Gonadotropin-releasing hormone receptor (328 aa).

Over 1-38 the chain is Extracellular; sequence MANSASPEQNQNHCSASNSSIPLTQANLPTLTLSGKIR. N-linked (GlcNAc...) asparagine glycosylation is present at Asn18. Residues 39-59 traverse the membrane as a helical segment; sequence VTVTFFLFLLSTTFNASFLLK. Residues 60 to 84 are Cytoplasmic-facing; it reads LHKWTQKKENGKKLSKMKVLLKHLT. Residues 85-105 traverse the membrane as a helical segment; it reads LANLLETLIVMPLDGMWNITV. Over 106–115 the chain is Extracellular; that stretch reads QWYAGELLCK. Cys114 and Cys196 form a disulfide bridge. Residues 116-136 traverse the membrane as a helical segment; sequence VLSYLKLFSMYAPAFMMVVIS. The Cytoplasmic segment spans residues 137–157; sequence LDRSLAITRPLAVKSNSKLGR. Residues 158-178 form a helical membrane-spanning segment; that stretch reads SMIGLAWLLSSIFAGPQLYIF. At 179–208 the chain is on the extracellular side; it reads RMIHLADSSGQTEGFSQCVTHCSFPQWWHQ. Residues 209–229 form a helical membrane-spanning segment; sequence AFYNFFTFSCLFIIPLLFMLI. Residues 230–271 lie on the Cytoplasmic side of the membrane; that stretch reads CNAKIIFTLTRVLHQDPHKLQLNQSKNNIPRARLRTLKMTVA. Residues 272–292 form a helical membrane-spanning segment; sequence FATSFTVCWTPYYVLGIWYWF. At 293-306 the chain is on the extracellular side; that stretch reads DPEMLNRVSDPVNH. A helical membrane pass occupies residues 307-327; that stretch reads FFFLFALLNPCFDPLIYGYFS. Residue Leu328 is a topological domain, cytoplasmic.

It belongs to the G-protein coupled receptor 1 family.

The protein resides in the cell membrane. Its function is as follows. Receptor for gonadotropin releasing hormone (GnRH) that mediates the action of GnRH to stimulate the secretion of the gonadotropic hormones luteinizing hormone (LH) and follicle-stimulating hormone (FSH). This receptor mediates its action by association with G-proteins that activate a phosphatidylinositol-calcium second messenger system. This is Gonadotropin-releasing hormone receptor (GNRHR) from Equus caballus (Horse).